The sequence spans 65 residues: uncharacterized protein (65 aa).

Its subcellular location is the plastid. It localises to the chloroplast. This is an uncharacterized protein from Mesostigma viride (Green alga).